The following is a 227-amino-acid chain: Homeobox-leucine zipper protein ATHB-54 (227 aa).

Positions 65 to 124 (EITKKRKLTPIQLRLLEESFEEEKRLEPDRKLWLAEKLGLQPSQVAVWFQNRRARYKTKQ) form a DNA-binding region, homeobox. The interval 125–153 (LEHDCDSLKASYAKLKTDWDILFVQNQTL) is leucine-zipper. The disordered stretch occupies residues 175–198 (IERKRLGEEGSSVKSDNTQYSEEE).

Belongs to the HD-ZIP homeobox family. Class I subfamily. Predominantly expressed in flowers and siliques.

The protein localises to the nucleus. In terms of biological role, probable transcription factor. In Arabidopsis thaliana (Mouse-ear cress), this protein is Homeobox-leucine zipper protein ATHB-54 (ATHB-54).